Reading from the N-terminus, the 336-residue chain is S-adenosylmethionine:tRNA ribosyltransferase-isomerase (336 aa).

It belongs to the QueA family. In terms of assembly, monomer.

The protein localises to the cytoplasm. The catalysed reaction is 7-aminomethyl-7-carbaguanosine(34) in tRNA + S-adenosyl-L-methionine = epoxyqueuosine(34) in tRNA + adenine + L-methionine + 2 H(+). The protein operates within tRNA modification; tRNA-queuosine biosynthesis. In terms of biological role, transfers and isomerizes the ribose moiety from AdoMet to the 7-aminomethyl group of 7-deazaguanine (preQ1-tRNA) to give epoxyqueuosine (oQ-tRNA). The protein is S-adenosylmethionine:tRNA ribosyltransferase-isomerase of Sulfurihydrogenibium sp. (strain YO3AOP1).